The primary structure comprises 250 residues: Heme oxygenase 2 (250 aa).

Histidine 16 contacts heme b. The tract at residues 228–250 (QDRPGSTEARSTAGHPITLMVGE) is disordered.

Belongs to the heme oxygenase family. Homodimer.

It carries out the reaction heme b + 3 reduced [NADPH--hemoprotein reductase] + 3 O2 = biliverdin IXalpha + CO + Fe(2+) + 3 oxidized [NADPH--hemoprotein reductase] + 3 H2O + H(+). Its function is as follows. Catalyzes the opening of the heme ring with the release of iron. Key enzyme in the synthesis of the chromophoric part of the photosynthetic antennae. The polypeptide is Heme oxygenase 2 (pbsA2) (Synechocystis sp. (strain ATCC 27184 / PCC 6803 / Kazusa)).